The following is a 431-amino-acid chain: Enolase (431 aa).

Gln-166 contributes to the (2R)-2-phosphoglycerate binding site. Glu-208 serves as the catalytic Proton donor. Asp-245, Glu-288, and Asp-315 together coordinate Mg(2+). (2R)-2-phosphoglycerate is bound by residues Lys-340, Arg-369, Ser-370, and Lys-391. Lys-340 acts as the Proton acceptor in catalysis.

It belongs to the enolase family. The cofactor is Mg(2+).

It localises to the cytoplasm. The protein resides in the secreted. Its subcellular location is the cell surface. It carries out the reaction (2R)-2-phosphoglycerate = phosphoenolpyruvate + H2O. It functions in the pathway carbohydrate degradation; glycolysis; pyruvate from D-glyceraldehyde 3-phosphate: step 4/5. Functionally, catalyzes the reversible conversion of 2-phosphoglycerate (2-PG) into phosphoenolpyruvate (PEP). It is essential for the degradation of carbohydrates via glycolysis. This Clostridium tetani (strain Massachusetts / E88) protein is Enolase.